The sequence spans 424 residues: Glutamate-1-semialdehyde 2,1-aminomutase (424 aa).

Position 258 is an N6-(pyridoxal phosphate)lysine (Lys258).

This sequence belongs to the class-III pyridoxal-phosphate-dependent aminotransferase family. HemL subfamily. Requires pyridoxal 5'-phosphate as cofactor.

The protein resides in the cytoplasm. The enzyme catalyses (S)-4-amino-5-oxopentanoate = 5-aminolevulinate. It participates in porphyrin-containing compound metabolism; protoporphyrin-IX biosynthesis; 5-aminolevulinate from L-glutamyl-tRNA(Glu): step 2/2. The polypeptide is Glutamate-1-semialdehyde 2,1-aminomutase (Pyrobaculum neutrophilum (strain DSM 2338 / JCM 9278 / NBRC 100436 / V24Sta) (Thermoproteus neutrophilus)).